We begin with the raw amino-acid sequence, 288 residues long: Pteridine reductase 1 (288 aa).

17 to 40 (RLGRSIAEGLHAEGYAVCLHYHRS) contacts NADP(+). Substrate is bound at residue Ser-175. The active-site Proton acceptor is the Tyr-194.

It belongs to the short-chain dehydrogenases/reductases (SDR) family. As to quaternary structure, homotetramer.

It carries out the reaction (6R)-L-erythro-5,6,7,8-tetrahydrobiopterin + 2 NADP(+) = L-erythro-biopterin + 2 NADPH + 2 H(+). It participates in cofactor biosynthesis; tetrahydrobiopterin biosynthesis; tetrahydrobiopterin from biopterin: step 1/1. In terms of biological role, exhibits a NADPH-dependent biopterin reductase activity. Has good activity with folate and significant activity with dihydrofolate and dihydrobiopterin, but not with quinonoid dihydrobiopterin. Confers resistance to methotrexate (MTX). This is Pteridine reductase 1 (PTR1) from Leishmania major.